The primary structure comprises 136 residues: ATP synthase epsilon chain (136 aa).

It belongs to the ATPase epsilon chain family. In terms of assembly, F-type ATPases have 2 components, CF(1) - the catalytic core - and CF(0) - the membrane proton channel. CF(1) has five subunits: alpha(3), beta(3), gamma(1), delta(1), epsilon(1). CF(0) has three main subunits: a, b and c.

Its subcellular location is the cell inner membrane. Its function is as follows. Produces ATP from ADP in the presence of a proton gradient across the membrane. The polypeptide is ATP synthase epsilon chain (Persephonella marina (strain DSM 14350 / EX-H1)).